A 241-amino-acid chain; its full sequence is Tetraspanin-1 (241 aa).

The next 3 helical transmembrane spans lie at 12–32 (ILFN…GIWV), 53–73 (FVNV…LGFL), and 89–109 (FFSI…VALV). Asn-154 is a glycosylation site (N-linked (GlcNAc...) asparagine). The helical transmembrane segment at 212 to 232 (AVTVGGVAVGVAALELAAMVV) threads the bilayer.

It belongs to the tetraspanin (TM4SF) family. In terms of assembly, interacts with SLC19A2. Interacts with NTRK1/TRKA.

Its subcellular location is the cell membrane. It localises to the lysosome membrane. Functionally, structural component of specialized membrane microdomains known as tetraspanin-enriched microdomains (TERMs), which act as platforms for receptor clustering and signaling. Participates thereby in diverse biological functions such as cell signal transduction, adhesion, migration and protein trafficking. Regulates neuronal differentiation in response to NGF by facilitating NGF-mediated activation of NTRK1/TRKA receptor tyrosine kinase and subsequent downstream signaling pathways. Plays a role in the inhibition of TNFalpha-induced apoptosis. Mechanistically, inhibits the NF-kappa-B signaling pathway by blocking phosphorylation of CHUK. Also promotes the stability of the thiamine transporter 1/SLC19A2 in intestinal epithelial cells leading to an increase of thiamine uptake process. The chain is Tetraspanin-1 (Tspan1) from Rattus norvegicus (Rat).